Here is a 241-residue protein sequence, read N- to C-terminus: Demethylmenaquinone methyltransferase (241 aa).

Residues T68, D88, and 114 to 115 (DA) contribute to the S-adenosyl-L-methionine site.

The protein belongs to the class I-like SAM-binding methyltransferase superfamily. MenG/UbiE family.

It catalyses the reaction a 2-demethylmenaquinol + S-adenosyl-L-methionine = a menaquinol + S-adenosyl-L-homocysteine + H(+). It participates in quinol/quinone metabolism; menaquinone biosynthesis; menaquinol from 1,4-dihydroxy-2-naphthoate: step 2/2. In terms of biological role, methyltransferase required for the conversion of demethylmenaquinol (DMKH2) to menaquinol (MKH2). The chain is Demethylmenaquinone methyltransferase from Deinococcus radiodurans (strain ATCC 13939 / DSM 20539 / JCM 16871 / CCUG 27074 / LMG 4051 / NBRC 15346 / NCIMB 9279 / VKM B-1422 / R1).